The sequence spans 104 residues: Flagellar hook-basal body complex protein FliE (104 aa).

Belongs to the FliE family.

The protein localises to the bacterial flagellum basal body. This chain is Flagellar hook-basal body complex protein FliE, found in Salmonella arizonae (strain ATCC BAA-731 / CDC346-86 / RSK2980).